Here is a 294-residue protein sequence, read N- to C-terminus: DEP domain-containing protein 4 (294 aa).

A DEP domain is found at 71–162 (LQAQVEIKRR…SNISLYRFLG (92 aa)).

The protein is DEP domain-containing protein 4 (DEPDC4) of Homo sapiens (Human).